The primary structure comprises 368 residues: 3-dehydroquinate synthase (368 aa).

NAD(+) contacts are provided by residues 131-132, lysine 144, and lysine 153; that span reads TT. Positions 186, 249, and 267 each coordinate Zn(2+).

It belongs to the sugar phosphate cyclases superfamily. Dehydroquinate synthase family. Co(2+) is required as a cofactor. The cofactor is Zn(2+). It depends on NAD(+) as a cofactor.

It localises to the cytoplasm. It carries out the reaction 7-phospho-2-dehydro-3-deoxy-D-arabino-heptonate = 3-dehydroquinate + phosphate. The protein operates within metabolic intermediate biosynthesis; chorismate biosynthesis; chorismate from D-erythrose 4-phosphate and phosphoenolpyruvate: step 2/7. In terms of biological role, catalyzes the conversion of 3-deoxy-D-arabino-heptulosonate 7-phosphate (DAHP) to dehydroquinate (DHQ). This Pelagibacter ubique (strain HTCC1062) protein is 3-dehydroquinate synthase.